Reading from the N-terminus, the 185-residue chain is Elongation factor P (185 aa).

This sequence belongs to the elongation factor P family.

The protein resides in the cytoplasm. It participates in protein biosynthesis; polypeptide chain elongation. Involved in peptide bond synthesis. Stimulates efficient translation and peptide-bond synthesis on native or reconstituted 70S ribosomes in vitro. Probably functions indirectly by altering the affinity of the ribosome for aminoacyl-tRNA, thus increasing their reactivity as acceptors for peptidyl transferase. The chain is Elongation factor P from Agathobacter rectalis (strain ATCC 33656 / DSM 3377 / JCM 17463 / KCTC 5835 / VPI 0990) (Eubacterium rectale).